The following is a 27-amino-acid chain: Flagellar filament 31.5 kDa core protein (27 aa).

It belongs to the bacterial flagellin family. As to quaternary structure, the flagellum consists of an outer layer composed of repeating units of FlaA around a core that contains one or all of five antigenically related polypeptides.

The protein resides in the periplasmic flagellum. The protein localises to the periplasm. Its function is as follows. Component of the core of the flagella. The polypeptide is Flagellar filament 31.5 kDa core protein (Spirochaeta aurantia).